The sequence spans 153 residues: Endoribonuclease YbeY (153 aa).

Zn(2+)-binding residues include H114, H118, and H124.

Belongs to the endoribonuclease YbeY family. The cofactor is Zn(2+).

It localises to the cytoplasm. Its function is as follows. Single strand-specific metallo-endoribonuclease involved in late-stage 70S ribosome quality control and in maturation of the 3' terminus of the 16S rRNA. In Shewanella denitrificans (strain OS217 / ATCC BAA-1090 / DSM 15013), this protein is Endoribonuclease YbeY.